Reading from the N-terminus, the 120-residue chain is Large ribosomal subunit protein uL18 (120 aa).

It belongs to the universal ribosomal protein uL18 family. As to quaternary structure, part of the 50S ribosomal subunit; part of the 5S rRNA/L5/L18/L25 subcomplex. Contacts the 5S and 23S rRNAs.

Functionally, this is one of the proteins that bind and probably mediate the attachment of the 5S RNA into the large ribosomal subunit, where it forms part of the central protuberance. This is Large ribosomal subunit protein uL18 from Janthinobacterium sp. (strain Marseille) (Minibacterium massiliensis).